A 233-amino-acid polypeptide reads, in one-letter code: Probable 2-phosphosulfolactate phosphatase (233 aa).

The protein belongs to the ComB family. Requires Mg(2+) as cofactor.

It carries out the reaction (2R)-O-phospho-3-sulfolactate + H2O = (2R)-3-sulfolactate + phosphate. This Clostridium tetani (strain Massachusetts / E88) protein is Probable 2-phosphosulfolactate phosphatase.